The following is a 150-amino-acid chain: Deoxyuridine 5'-triphosphate nucleotidohydrolase (150 aa).

Substrate contacts are provided by residues 69–71, asparagine 82, 86–88, and lysine 96; these read RSG and LID.

Belongs to the dUTPase family. Mg(2+) serves as cofactor.

The enzyme catalyses dUTP + H2O = dUMP + diphosphate + H(+). The protein operates within pyrimidine metabolism; dUMP biosynthesis; dUMP from dCTP (dUTP route): step 2/2. Functionally, this enzyme is involved in nucleotide metabolism: it produces dUMP, the immediate precursor of thymidine nucleotides and it decreases the intracellular concentration of dUTP so that uracil cannot be incorporated into DNA. The protein is Deoxyuridine 5'-triphosphate nucleotidohydrolase of Neisseria gonorrhoeae (strain NCCP11945).